A 230-amino-acid chain; its full sequence is Thioredoxin domain-containing protein PLP3B (230 aa).

The Thioredoxin domain maps to 89–173; sequence VSEGDFLGEV…GIAMDRLVGF (85 aa). The tract at residues 199 to 230 is disordered; the sequence is EKRKEEDEEDYEYQESIRRSVRSSANVDSDSD. Polar residues predominate over residues 220–230; the sequence is RSSANVDSDSD.

It belongs to the phosducin family. As to quaternary structure, interacts with TUBB2, TUBB3, TUBB4 and TUBB5. Expressed in roots, cotyledons, leaves, stems and flowers.

The protein resides in the cytoplasm. Its subcellular location is the nucleus. Tubulin-binding protein involved in microtubule formation. The chain is Thioredoxin domain-containing protein PLP3B (PLP3B) from Arabidopsis thaliana (Mouse-ear cress).